A 155-amino-acid chain; its full sequence is 2-C-methyl-D-erythritol 2,4-cyclodiphosphate synthase (155 aa).

2 residues coordinate a divalent metal cation: aspartate 8 and histidine 10. Residues 8–10 and 34–35 each bind 4-CDP-2-C-methyl-D-erythritol 2-phosphate; these read DVH and HS. Residue histidine 42 participates in a divalent metal cation binding. Residues 56 to 58, 61 to 65, 100 to 106, 132 to 135, phenylalanine 139, and lysine 142 contribute to the 4-CDP-2-C-methyl-D-erythritol 2-phosphate site; these read DIG, FPDSD, AQKPKML, and TTEE.

Belongs to the IspF family. In terms of assembly, homotrimer. A divalent metal cation serves as cofactor.

It catalyses the reaction 4-CDP-2-C-methyl-D-erythritol 2-phosphate = 2-C-methyl-D-erythritol 2,4-cyclic diphosphate + CMP. The protein operates within isoprenoid biosynthesis; isopentenyl diphosphate biosynthesis via DXP pathway; isopentenyl diphosphate from 1-deoxy-D-xylulose 5-phosphate: step 4/6. Its function is as follows. Involved in the biosynthesis of isopentenyl diphosphate (IPP) and dimethylallyl diphosphate (DMAPP), two major building blocks of isoprenoid compounds. Catalyzes the conversion of 4-diphosphocytidyl-2-C-methyl-D-erythritol 2-phosphate (CDP-ME2P) to 2-C-methyl-D-erythritol 2,4-cyclodiphosphate (ME-CPP) with a corresponding release of cytidine 5-monophosphate (CMP). In Clostridium botulinum (strain Kyoto / Type A2), this protein is 2-C-methyl-D-erythritol 2,4-cyclodiphosphate synthase.